The sequence spans 110 residues: Prothymosin alpha (110 aa).

An N-acetylmethionine modification is found at Met1. Positions 1–110 (MSDAAVDTSS…TKKQKTDEDD (110 aa)) are disordered. Ser2 carries the post-translational modification N-acetylserine; in Prothymosin alpha, N-terminally processed. Ser2 carries the phosphoserine modification. At Thr8 the chain carries Phosphothreonine. Phosphoserine occurs at positions 9 and 10. Phosphothreonine is present on residues Thr13 and Thr14. Positions 13 to 31 (TTKDLKEKKEVVEEAENGR) are enriched in basic and acidic residues. Lys15 carries the N6-acetyllysine; alternate modification. Residue Lys15 is modified to N6-succinyllysine; alternate. Over residues 42 to 83 (ENGEQEADNEVDEEEEEGGEEEEEEEEGDGEEEDGDEDEEAE) the composition is skewed to acidic residues. Basic and acidic residues predominate over residues 100 to 110 (DTKKQKTDEDD). Residue Thr101 is modified to Phosphothreonine. Lys102 carries the post-translational modification N6-acetyllysine; alternate. Lys102 participates in a covalent cross-link: Glycyl lysine isopeptide (Lys-Gly) (interchain with G-Cter in SUMO2); alternate. The residue at position 106 (Thr106) is a Phosphothreonine.

This sequence belongs to the pro/parathymosin family. In terms of assembly, interacts with NUPR1; regulates apoptotic process. In terms of processing, covalently linked to a small RNA of about 20 nucleotides.

The protein resides in the nucleus. Its function is as follows. Prothymosin alpha may mediate immune function by conferring resistance to certain opportunistic infections. The chain is Prothymosin alpha (PTMA) from Pongo abelii (Sumatran orangutan).